Consider the following 1014-residue polypeptide: MTATITNLPSLYDPFTTEAKWQKFWEENQIYKADPNKGGEPYCVVIPPPNVTGSLHMGHAFESALIDTLVRYHRMQGRNTLWLPGTDHASIAVHTILEKQLKAEGKTRQELGREKFLERSWQWKAESGGTIVNQLRRLGVSVDWSRERFTLDEGLSKAVAEAFVSLYDEGLIYRGEYLVNWCPATQSAVSDVEVESKEVEGNLWHFRYPLTDGSGYVEVATTRPETMLGDTAVAVNPNDDRYKHLIGKTLTLPITQQEIPIISDELVDPAFGTGCVKVTPAHDLNDFEMGKRHNLPFINILNKDGTLNANGGEFAGQDRFVARKNVVSRLETDGFLVKIEDYKHTVPYSDRGKVPVEPLLSTQWFVKIRPLADKSLAFLDEKNSPEFVPQRWTKVYRDWLVNLRDWCISRQLWWGHQIPAWYAVSETNGQITDNTPFVVAKSTNEAWEKAKSQFGENVQLEQDPDVLDTWFSSGLWPFSTLGWPEQTPDLAKYYPTTTLVTGFDIIFFWVARMTMMAGHFTGQMPFQTVYIHGLVRDENNKKMSKSANNGIDPLLLIDKYGTDALRYTLVREVAGAGQDIRLEYDRKKDESPSVEASRNFANKLWNAARFVMMNLDGLSTGDLGLGTGNSQSLELSDGVPPSLADRWIISRYHQVIKQTTHYIDNYGLGEAAKGIYEFIWGDFCDWYIELVKSRLQKDADPLSRKAAQQTLAYVLEGILKLLHPFMPHITEEIWQTLTQQPEDSPQTLALQAYPQADVNLINPALETQFDLLIGTIRTIRNLRAEAEVKPGAKIIANLQTDSESERQILMAGQSYIKDLAKVETLTIAAGQQPSTVTKKKPQKGLKTIGLVIAGLVFLRVALAVADTVDNVPFLGTFFEIVGLGYSAWFVTRNLLSTPARKRFLAKFFAPPTEKNLSGTVQQAPEAAEKSIAGVVGTVQVVIPLAGVVDIETLRAKLERSISKAETEAQSLKGRLSNPKFVDKAPADVVQAARDALAEAEKQVEILRLRLQTLV.

The 'HIGH' region motif lies at Pro-49–His-59. The 'KMSKS' region motif lies at Lys-542–Ser-546. Residue Lys-545 participates in ATP binding. Positions Val-947–Val-1014 form a coiled coil.

It belongs to the class-I aminoacyl-tRNA synthetase family. ValS type 1 subfamily. Monomer.

The protein resides in the cytoplasm. It carries out the reaction tRNA(Val) + L-valine + ATP = L-valyl-tRNA(Val) + AMP + diphosphate. Functionally, catalyzes the attachment of valine to tRNA(Val). As ValRS can inadvertently accommodate and process structurally similar amino acids such as threonine, to avoid such errors, it has a 'posttransfer' editing activity that hydrolyzes mischarged Thr-tRNA(Val) in a tRNA-dependent manner. This chain is Valine--tRNA ligase, found in Nostoc sp. (strain PCC 7120 / SAG 25.82 / UTEX 2576).